The chain runs to 263 residues: 5'-nucleotidase SurE (263 aa).

A divalent metal cation contacts are provided by D21, D22, S52, and N105.

It belongs to the SurE nucleotidase family. It depends on a divalent metal cation as a cofactor.

The protein localises to the cytoplasm. It carries out the reaction a ribonucleoside 5'-phosphate + H2O = a ribonucleoside + phosphate. Its function is as follows. Nucleotidase that shows phosphatase activity on nucleoside 5'-monophosphates. This is 5'-nucleotidase SurE from Vibrio cholerae serotype O1 (strain ATCC 39541 / Classical Ogawa 395 / O395).